We begin with the raw amino-acid sequence, 176 residues long: Oleosin Ara h 14.0103 (176 aa).

Position 2 is an N-acetylalanine; alternate (A2). 3 helical membrane-spanning segments follow: residues 50–70 (IIAVLVGVPTGGTLLLLSGLS), 75–95 (IIGLAIATPVFIFFSPVIVPA), and 96–116 (VVTIGLAVTGILTAGACGLTG). The disordered stretch occupies residues 156-176 (KTKDAGQEIQTKAQDVKRSSS).

This sequence belongs to the oleosin family. In terms of tissue distribution, expressed in seeds (at protein level).

It localises to the lipid droplet. Its subcellular location is the membrane. Its function is as follows. May have a structural role to stabilize the lipid body during desiccation of the seed by preventing coalescence of the oil. Probably interacts with both lipid and phospholipid moieties of lipid bodies. May also provide recognition signals for specific lipase anchorage in lipolysis during seedling growth. This chain is Oleosin Ara h 14.0103, found in Arachis hypogaea (Peanut).